The following is a 510-amino-acid chain: Lysine--tRNA ligase (510 aa).

Mg(2+) contacts are provided by Glu-420 and Glu-427.

This sequence belongs to the class-II aminoacyl-tRNA synthetase family. In terms of assembly, homodimer. Mg(2+) is required as a cofactor.

It is found in the cytoplasm. The catalysed reaction is tRNA(Lys) + L-lysine + ATP = L-lysyl-tRNA(Lys) + AMP + diphosphate. The chain is Lysine--tRNA ligase from Vibrio vulnificus (strain YJ016).